A 364-amino-acid chain; its full sequence is uncharacterized protein (364 aa).

3 consecutive transmembrane segments (helical) span residues 41 to 61 (NIFT…FFGL), 298 to 318 (VIYI…ITYM), and 329 to 349 (LLFY…SIII).

The protein localises to the membrane. This is an uncharacterized protein from Mycoplasma capricolum subsp. capricolum (strain California kid / ATCC 27343 / NCTC 10154).